The following is a 393-amino-acid chain: S-adenosylmethionine synthase (393 aa).

His-17 is an ATP binding site. Asp-19 lines the Mg(2+) pocket. Glu-45 provides a ligand contact to K(+). 2 residues coordinate L-methionine: Glu-58 and Gln-106. A flexible loop region spans residues 106–116 (QSAHIAQGVNA). Residues 171-173 (DAK), 237-238 (KF), Asp-246, 252-253 (RK), Ala-269, and Lys-273 each bind ATP. Asp-246 lines the L-methionine pocket. L-methionine is bound at residue Lys-277.

This sequence belongs to the AdoMet synthase family. In terms of assembly, homotetramer; dimer of dimers. It depends on Mg(2+) as a cofactor. K(+) is required as a cofactor.

The protein resides in the cytoplasm. It carries out the reaction L-methionine + ATP + H2O = S-adenosyl-L-methionine + phosphate + diphosphate. The protein operates within amino-acid biosynthesis; S-adenosyl-L-methionine biosynthesis; S-adenosyl-L-methionine from L-methionine: step 1/1. Functionally, catalyzes the formation of S-adenosylmethionine (AdoMet) from methionine and ATP. The overall synthetic reaction is composed of two sequential steps, AdoMet formation and the subsequent tripolyphosphate hydrolysis which occurs prior to release of AdoMet from the enzyme. This is S-adenosylmethionine synthase from Ruegeria pomeroyi (strain ATCC 700808 / DSM 15171 / DSS-3) (Silicibacter pomeroyi).